The chain runs to 161 residues: Endoribonuclease YbeY (161 aa).

Positions 120, 124, and 130 each coordinate Zn(2+).

Belongs to the endoribonuclease YbeY family. Zn(2+) is required as a cofactor.

It localises to the cytoplasm. Functionally, single strand-specific metallo-endoribonuclease involved in late-stage 70S ribosome quality control and in maturation of the 3' terminus of the 16S rRNA. The protein is Endoribonuclease YbeY of Chlamydia muridarum (strain MoPn / Nigg).